Reading from the N-terminus, the 269-residue chain is uncharacterized protein (269 aa).

Basic residues predominate over residues 1 to 12 (MSKRTNNKKRKH). Residues 1 to 82 (MSKRTNNKKR…KKKENGNENV (82 aa)) form a disordered region. Acidic residues predominate over residues 21–33 (PENQDENQDEEFL). The segment covering 34-63 (EDKNKDKNQNKNKDKNKNKDMNKNKNKDMN) has biased composition (basic and acidic residues).

This is an uncharacterized protein from Dictyostelium discoideum (Social amoeba).